A 287-amino-acid chain; its full sequence is Transmembrane protein 163 (287 aa).

The disordered stretch occupies residues 1–63 (METAAGSERR…ESGQFSDGLE (63 aa)). At 1 to 86 (METAAGSERR…HEAQNYRKKA (86 aa)) the chain is on the cytoplasmic side. A phosphoserine mark is found at Ser11, Ser53, Ser55, and Ser59. Residues 40-70 (EPPQPEEERQLRISESGQFSDGLEDRGLLES) are required for interaction with MCOLN1. A helical transmembrane segment spans residues 87-107 (LWVSWFSIIVTLALAVAAFTV). The Extracellular segment spans residues 108 to 114 (SVMRYSA). The helical transmembrane segment at 115-135 (SAFGFAFDAILDVLSSAIVLW) threads the bilayer. Topologically, residues 136–148 (RYSNAAAVHSAHR) are cytoplasmic. The helical transmembrane segment at 149-169 (EYIACVILGVIFLLSSVCIVV) threads the bilayer. At 170–185 (KAIHDLSTKLLPEVDD) the chain is on the extracellular side. A helical transmembrane segment spans residues 186–206 (FLFSVSILSGILCSILAVLKF). Over 207-215 (MLGKVLTSR) the chain is Cytoplasmic. The helical transmembrane segment at 216 to 236 (ALITDGFNSLVGGVMGFSILL) threads the bilayer. The Extracellular portion of the chain corresponds to 237–253 (SAEVFKHNSAVWYLDGS). The helical transmembrane segment at 254 to 274 (IGVLIGLTIFAYGVKLLIDMV) threads the bilayer. Residues 275–287 (PRVRQTRHYEMFE) are Cytoplasmic-facing.

Belongs to the TMEM163 family. As to quaternary structure, homodimer. Interacts with MCOLN1/TRPML1. Interacts with SLC30A1, SLC30A2, SLC30A3 and SLC30A4.

The protein resides in the cytoplasmic vesicle. It localises to the secretory vesicle. Its subcellular location is the synaptic vesicle membrane. The protein localises to the early endosome membrane. It is found in the late endosome membrane. The protein resides in the lysosome membrane. It localises to the cell membrane. It carries out the reaction Zn(2+)(in) = Zn(2+)(out). In terms of biological role, zinc ion transporter that mediates zinc efflux and plays a crucial role in intracellular zinc homeostasis. Binds the divalent cations Zn(2+), Ni(2+), and to a minor extent Cu(2+). Is a functional modulator of P2X purinoceptors, including P2RX1, P2RX3, P2RX4 and P2RX7. Plays a role in central nervous system development and is required for myelination, and survival and proliferation of oligodendrocytes. In Bos taurus (Bovine), this protein is Transmembrane protein 163 (TMEM163).